The following is a 472-amino-acid chain: Eukaryotic translation initiation factor 2 subunit 3 (472 aa).

A2 is modified (N-acetylalanine). The residue at position 16 (S16) is a Phosphoserine. The tr-type G domain occupies 39 to 248 (QATINIGTIG…IVKKIPVPPR (210 aa)). Residues 48-55 (GHVAHGKS) form a G1 region. Residue 51–56 (AHGKST) participates in GTP binding. Residues 76–80 (NITIK) are G2. Residues 134 to 137 (DCPG) are G3. Residues 190–193 (NKID) and 225–227 (SAQ) each bind GTP. The G4 stretch occupies residues 190–193 (NKID). Residues 225–227 (SAQ) are G5. The interval 457–469 (GQIRRGVTIKPTV) is interacts with CDC123.

This sequence belongs to the TRAFAC class translation factor GTPase superfamily. Classic translation factor GTPase family. EIF2G subfamily. In terms of assembly, eukaryotic translation initiation factor 2 eIF2 is a heterotrimeric complex composed of an alpha (EIF2S1), a beta (EIF2S2) and a gamma (EIF2S3) chain. eIF2 is member of the 43S pre-initiation complex (43S PIC). Interacts (via C-terminus) with CDC123; the interaction is direct.

It is found in the cytoplasm. Its subcellular location is the cytosol. The catalysed reaction is GTP + H2O = GDP + phosphate + H(+). Functionally, member of the eIF2 complex that functions in the early steps of protein synthesis by forming a ternary complex with GTP and initiator tRNA. This complex binds to a 40S ribosomal subunit, followed by mRNA binding to form the 43S pre-initiation complex (43S PIC). Junction of the 60S ribosomal subunit to form the 80S initiation complex is preceded by hydrolysis of the GTP bound to eIF2 and release of an eIF2-GDP binary complex. In order for eIF2 to recycle and catalyze another round of initiation, the GDP bound to eIF2 must exchange with GTP by way of a reaction catalyzed by eIF-2B. The sequence is that of Eukaryotic translation initiation factor 2 subunit 3 (EIF2S3) from Bos taurus (Bovine).